Consider the following 219-residue polypeptide: 2-hydroxy-3-keto-5-methylthiopentenyl-1-phosphate phosphatase (219 aa).

The protein belongs to the HAD-like hydrolase superfamily. MtnX family.

The enzyme catalyses 2-hydroxy-5-methylsulfanyl-3-oxopent-1-enyl phosphate + H2O = 1,2-dihydroxy-5-(methylsulfanyl)pent-1-en-3-one + phosphate. It functions in the pathway amino-acid biosynthesis; L-methionine biosynthesis via salvage pathway; L-methionine from S-methyl-5-thio-alpha-D-ribose 1-phosphate: step 4/6. In terms of biological role, dephosphorylates 2-hydroxy-3-keto-5-methylthiopentenyl-1-phosphate (HK-MTPenyl-1-P) yielding 1,2-dihydroxy-3-keto-5-methylthiopentene (DHK-MTPene). In Bacillus cereus (strain ZK / E33L), this protein is 2-hydroxy-3-keto-5-methylthiopentenyl-1-phosphate phosphatase.